Here is a 331-residue protein sequence, read N- to C-terminus: Lipoyl synthase (331 aa).

The disordered stretch occupies residues M1–A33. The segment covering A7–A17 has biased composition (polar residues). Residues D21 to A33 show a composition bias toward basic and acidic residues. The [4Fe-4S] cluster site is built by C78, C83, C89, C104, C108, C111, and S318. A Radical SAM core domain is found at C89–T307.

The protein belongs to the radical SAM superfamily. Lipoyl synthase family. It depends on [4Fe-4S] cluster as a cofactor.

The protein localises to the cytoplasm. It catalyses the reaction [[Fe-S] cluster scaffold protein carrying a second [4Fe-4S](2+) cluster] + N(6)-octanoyl-L-lysyl-[protein] + 2 oxidized [2Fe-2S]-[ferredoxin] + 2 S-adenosyl-L-methionine + 4 H(+) = [[Fe-S] cluster scaffold protein] + N(6)-[(R)-dihydrolipoyl]-L-lysyl-[protein] + 4 Fe(3+) + 2 hydrogen sulfide + 2 5'-deoxyadenosine + 2 L-methionine + 2 reduced [2Fe-2S]-[ferredoxin]. The protein operates within protein modification; protein lipoylation via endogenous pathway; protein N(6)-(lipoyl)lysine from octanoyl-[acyl-carrier-protein]: step 2/2. In terms of biological role, catalyzes the radical-mediated insertion of two sulfur atoms into the C-6 and C-8 positions of the octanoyl moiety bound to the lipoyl domains of lipoate-dependent enzymes, thereby converting the octanoylated domains into lipoylated derivatives. This chain is Lipoyl synthase, found in Cupriavidus necator (strain ATCC 17699 / DSM 428 / KCTC 22496 / NCIMB 10442 / H16 / Stanier 337) (Ralstonia eutropha).